A 395-amino-acid chain; its full sequence is Protein pelota (395 aa).

The PGF motif motif lies at 210-212; sequence PGF. Positions 371-395 are disordered; sequence PELEDSDDDDDEDGAAGGVADSDSD. A compositionally biased stretch (acidic residues) spans 372-384; that stretch reads ELEDSDDDDDEDG.

Belongs to the eukaryotic release factor 1 family. Pelota subfamily. As to quaternary structure, component of the Pelota-HBS1L complex, also named Dom34-Hbs1 complex, composed of pelo and HBS1. Interacts with Pink1 and Cnot4; the interaction with Cnot4 appears to be Pink1-dependent. Requires a divalent metal cation as cofactor. As to expression, expressed in ovaries and muscles (at protein level). Expressed throughout all development stages.

Its subcellular location is the nucleus. The protein localises to the cytoplasm. Component of the Pelota-HBS1L complex, a complex that recognizes stalled ribosomes and triggers the No-Go Decay (NGD) pathway. In the Pelota-HBS1L complex, pelo recognizes ribosomes stalled at the 3' end of an mRNA and engages stalled ribosomes by destabilizing mRNA in the mRNA channel. Following ribosome-binding, the Pelota-HBS1L complex promotes recruitment of pix, which drives the disassembly of stalled ribosomes, followed by degradation of damaged mRNAs as part of the NGD pathway. Required prior to the first meiotic division for spindle formation and nuclear envelope breakdown during spermatogenesis. Together with HBS1, promotes spermatid individualization during spermatogenesis. Required for ovarian germ line stem cell self-renewal and oocyte development during oogenesis. Together with HSB1, required for transposon silencing in the ovary and testis. As part of the Pink1-regulated signaling, is recruited to damaged mitochondrial and is required for recruitment of autophagy receptors and induction of mitophagy. Required for normal eye patterning and for mitotic divisions in the ovary. This Drosophila melanogaster (Fruit fly) protein is Protein pelota (pelo).